Here is a 138-residue protein sequence, read N- to C-terminus: Large ribosomal subunit protein uL13 (138 aa).

This sequence belongs to the universal ribosomal protein uL13 family. Part of the 50S ribosomal subunit.

This protein is one of the early assembly proteins of the 50S ribosomal subunit, although it is not seen to bind rRNA by itself. It is important during the early stages of 50S assembly. In Picrophilus torridus (strain ATCC 700027 / DSM 9790 / JCM 10055 / NBRC 100828 / KAW 2/3), this protein is Large ribosomal subunit protein uL13.